The sequence spans 1822 residues: Sperm flagellar protein 2 (1822 aa).

Residues Met1–Gln105 enclose the Calponin-homology (CH) domain. Coiled-coil stretches lie at residues Lys227–Gln260, Ala321–Lys396, Asn732–Lys758, and Cys871–Leu909. Disordered regions lie at residues Lys896–Pro1004, Glu1278–Pro1327, Ser1664–Lys1718, and Glu1803–Lys1822. Pro residues predominate over residues Leu911–Pro920. Basic and acidic residues-rich tracts occupy residues Glu921 to Gln930 and Pro949 to Leu968. The span at Lys975–Lys987 shows a compositional bias: low complexity. Composition is skewed to basic and acidic residues over residues Glu1278–Ser1292 and Lys1303–Lys1314. The segment at Glu1324–Ala1676 is interaction with IFT20. Residues Glu1686–Glu1712 are a coiled coil. The segment covering Asn1688 to Glu1708 has biased composition (basic and acidic residues).

Interacts (via C-terminus) with IFT20. Interacts with DYNC1I2.

The protein resides in the cell projection. Its subcellular location is the cilium. It localises to the flagellum. It is found in the cytoplasm. The protein localises to the golgi apparatus. Functionally, required for correct axoneme development in spermatozoa. Important for normal development of the manchette and sperm head morphology. Essential for male fertility. Plays a role in localization of the intraflagellar transport protein IFT20 to the manchette, suggesting function as an adapter for dynein-mediated protein transport during spermatogenesis. Also plays a role in bone growth where it seems to be required for normal osteoblast differentiation. This is Sperm flagellar protein 2 (SPEF2) from Homo sapiens (Human).